A 190-amino-acid chain; its full sequence is Holliday junction branch migration complex subunit RuvA (190 aa).

A domain I region spans residues 1 to 64 (MIGRITGTLI…EDAHILYGFA (64 aa)). The tract at residues 65–137 (TAAERGAFRE…MRGKLGADIG (73 aa)) is domain II. Residues 137 to 141 (GATAH) are flexible linker. The interval 142–190 (AVPDSQTDILNALLALGYSDKESQAALKKLPEGTGVSEGIRLALKALVR) is domain III.

The protein belongs to the RuvA family. In terms of assembly, homotetramer. Forms an RuvA(8)-RuvB(12)-Holliday junction (HJ) complex. HJ DNA is sandwiched between 2 RuvA tetramers; dsDNA enters through RuvA and exits via RuvB. An RuvB hexamer assembles on each DNA strand where it exits the tetramer. Each RuvB hexamer is contacted by two RuvA subunits (via domain III) on 2 adjacent RuvB subunits; this complex drives branch migration. In the full resolvosome a probable DNA-RuvA(4)-RuvB(12)-RuvC(2) complex forms which resolves the HJ.

Its subcellular location is the cytoplasm. Its function is as follows. The RuvA-RuvB-RuvC complex processes Holliday junction (HJ) DNA during genetic recombination and DNA repair, while the RuvA-RuvB complex plays an important role in the rescue of blocked DNA replication forks via replication fork reversal (RFR). RuvA specifically binds to HJ cruciform DNA, conferring on it an open structure. The RuvB hexamer acts as an ATP-dependent pump, pulling dsDNA into and through the RuvAB complex. HJ branch migration allows RuvC to scan DNA until it finds its consensus sequence, where it cleaves and resolves the cruciform DNA. The sequence is that of Holliday junction branch migration complex subunit RuvA from Bordetella petrii (strain ATCC BAA-461 / DSM 12804 / CCUG 43448).